Reading from the N-terminus, the 148-residue chain is Flagellar assembly factor FliW (148 aa).

It belongs to the FliW family. As to quaternary structure, interacts with translational regulator CsrA and flagellin(s).

It localises to the cytoplasm. Functionally, acts as an anti-CsrA protein, binds CsrA and prevents it from repressing translation of its target genes, one of which is flagellin. Binds to flagellin and participates in the assembly of the flagellum. This Ruminiclostridium cellulolyticum (strain ATCC 35319 / DSM 5812 / JCM 6584 / H10) (Clostridium cellulolyticum) protein is Flagellar assembly factor FliW.